A 66-amino-acid chain; its full sequence is Large ribosomal subunit protein bL33c (66 aa).

The protein belongs to the bacterial ribosomal protein bL33 family.

It localises to the plastid. Its subcellular location is the chloroplast. The sequence is that of Large ribosomal subunit protein bL33c from Brachypodium distachyon (Purple false brome).